The sequence spans 697 residues: Elongation factor G (697 aa).

Positions 8–283 (EHIRNIGICA…AVVDFLPSPT (276 aa)) constitute a tr-type G domain. Residues 17–24 (AHIDAGKT), 81–85 (DTPGH), and 135–138 (NKMD) each bind GTP.

This sequence belongs to the TRAFAC class translation factor GTPase superfamily. Classic translation factor GTPase family. EF-G/EF-2 subfamily.

It is found in the cytoplasm. Catalyzes the GTP-dependent ribosomal translocation step during translation elongation. During this step, the ribosome changes from the pre-translocational (PRE) to the post-translocational (POST) state as the newly formed A-site-bound peptidyl-tRNA and P-site-bound deacylated tRNA move to the P and E sites, respectively. Catalyzes the coordinated movement of the two tRNA molecules, the mRNA and conformational changes in the ribosome. This is Elongation factor G from Rickettsia massiliae (strain Mtu5).